The sequence spans 500 residues: MRNTVFLLGFWSVYCYFPAGSITTLRPQGSLRDEHHKPTGVPATARPSVAFNIRTSKDPEQEGCNLSLGDSKLLENCGFNMTAKTFFIIHGWTMSGMFESWLHKLVSALQMREKDANVVVVDWLPLAHQLYTDAVNNTRVVGQRVAGMLDWLQEKEEFSLGNVHLIGYSLGAHVAGYAGNFVKGTVGRITGLDPAGPMFEGVDINRRLSPDDADFVDVLHTYTLSFGLSIGIRMPVGHIDIYPNGGDFQPGCGFNDVIGSFAYGTISEMVKCEHERAVHLFVDSLVNQDKPSFAFQCTDSSRFKRGICLSCRKNRCNNIGYNAKKMRKKRNSKMYLKTRAGMPFKVYHYQLKVHMFSYNNSGDTQPTLYITLYGSNADSQNLPLEIVEKIELNATNTFLVYTEEDLGDLLKMRLTWEGVAHSWYNLWNEFRNYLSQPSNPSRELYIRRIRVKSGETQRKVTFCTQDPTKSSISPGQELWFHKCQDGWKMKNKTSPFVNLA.

The signal sequence occupies residues 1–20; the sequence is MRNTVFLLGFWSVYCYFPAG. An intrachain disulfide couples Cys64 to Cys77. N-linked (GlcNAc...) asparagine glycans are attached at residues Asn65, Asn80, and Asn136. The active-site Nucleophile is Ser169. The Charge relay system role is filled by Asp193. Cys252 and Cys272 form a disulfide bridge. His274 (charge relay system) is an active-site residue. 2 cysteine pairs are disulfide-bonded: Cys297/Cys316 and Cys308/Cys311. 325–337 contacts heparin; the sequence is KMRKKRNSKMYLK. In terms of domain architecture, PLAT spans 347–482; that stretch reads YHYQLKVHMF…SPGQELWFHK (136 aa). N-linked (GlcNAc...) asparagine glycosylation is found at Asn359 and Asn393. Cys463 and Cys483 form a disulfide bridge. Residue Asn491 is glycosylated (N-linked (GlcNAc...) asparagine).

Belongs to the AB hydrolase superfamily. Lipase family. Head to tail homodimer. As to expression, expressed in placenta, lung, liver, testis and spleen.

It localises to the secreted. The enzyme catalyses a triacylglycerol + H2O = a diacylglycerol + a fatty acid + H(+). The catalysed reaction is a 1,2-diacyl-sn-glycero-3-phosphocholine + H2O = a 2-acyl-sn-glycero-3-phosphocholine + a fatty acid + H(+). It carries out the reaction 1,2,3-tri-(9Z-octadecenoyl)-glycerol + H2O = di-(9Z)-octadecenoylglycerol + (9Z)-octadecenoate + H(+). It catalyses the reaction 1,2,3-tributanoylglycerol + H2O = dibutanoylglycerol + butanoate + H(+). The enzyme catalyses 1,2-dihexadecanoyl-sn-glycero-3-phosphocholine + H2O = hexadecanoyl-sn-glycero-3-phosphocholine + hexadecanoate + H(+). Functionally, exerts both phospholipase and triglyceride lipase activities. More active as a phospholipase than a triglyceride lipase. Hydrolyzes triglycerides, both with short-chain fatty acyl groups (tributyrin) and long-chain fatty acyl groups (triolein) with similar levels of activity toward both types of substrates. Hydrolyzes high density lipoproteins (HDL) more efficiently than other lipoproteins. In Mus musculus (Mouse), this protein is Endothelial lipase (Lipg).